We begin with the raw amino-acid sequence, 1386 residues long: DNA-directed RNA polymerase subunit beta'' (1386 aa).

The Zn(2+) site is built by C220, C289, C296, and C299.

The protein belongs to the RNA polymerase beta' chain family. RpoC2 subfamily. In plastids the minimal PEP RNA polymerase catalytic core is composed of four subunits: alpha, beta, beta', and beta''. When a (nuclear-encoded) sigma factor is associated with the core the holoenzyme is formed, which can initiate transcription. Requires Zn(2+) as cofactor.

Its subcellular location is the plastid. The protein resides in the chloroplast. It carries out the reaction RNA(n) + a ribonucleoside 5'-triphosphate = RNA(n+1) + diphosphate. Functionally, DNA-dependent RNA polymerase catalyzes the transcription of DNA into RNA using the four ribonucleoside triphosphates as substrates. The polypeptide is DNA-directed RNA polymerase subunit beta'' (Marchantia polymorpha (Common liverwort)).